Consider the following 471-residue polypeptide: 3-isopropylmalate dehydratase large subunit (471 aa).

[4Fe-4S] cluster contacts are provided by Cys349, Cys409, and Cys412.

Belongs to the aconitase/IPM isomerase family. LeuC type 1 subfamily. As to quaternary structure, heterodimer of LeuC and LeuD. The cofactor is [4Fe-4S] cluster.

The enzyme catalyses (2R,3S)-3-isopropylmalate = (2S)-2-isopropylmalate. The protein operates within amino-acid biosynthesis; L-leucine biosynthesis; L-leucine from 3-methyl-2-oxobutanoate: step 2/4. In terms of biological role, catalyzes the isomerization between 2-isopropylmalate and 3-isopropylmalate, via the formation of 2-isopropylmaleate. This chain is 3-isopropylmalate dehydratase large subunit, found in Aliivibrio salmonicida (strain LFI1238) (Vibrio salmonicida (strain LFI1238)).